The chain runs to 188 residues: Crossover junction endodeoxyribonuclease RuvC (188 aa).

Residues aspartate 7, glutamate 68, and aspartate 141 contribute to the active site. Mg(2+)-binding residues include aspartate 7, glutamate 68, and aspartate 141.

The protein belongs to the RuvC family. As to quaternary structure, homodimer which binds Holliday junction (HJ) DNA. The HJ becomes 2-fold symmetrical on binding to RuvC with unstacked arms; it has a different conformation from HJ DNA in complex with RuvA. In the full resolvosome a probable DNA-RuvA(4)-RuvB(12)-RuvC(2) complex forms which resolves the HJ. Mg(2+) is required as a cofactor.

The protein localises to the cytoplasm. It carries out the reaction Endonucleolytic cleavage at a junction such as a reciprocal single-stranded crossover between two homologous DNA duplexes (Holliday junction).. Functionally, the RuvA-RuvB-RuvC complex processes Holliday junction (HJ) DNA during genetic recombination and DNA repair. Endonuclease that resolves HJ intermediates. Cleaves cruciform DNA by making single-stranded nicks across the HJ at symmetrical positions within the homologous arms, yielding a 5'-phosphate and a 3'-hydroxyl group; requires a central core of homology in the junction. The consensus cleavage sequence is 5'-(A/T)TT(C/G)-3'. Cleavage occurs on the 3'-side of the TT dinucleotide at the point of strand exchange. HJ branch migration catalyzed by RuvA-RuvB allows RuvC to scan DNA until it finds its consensus sequence, where it cleaves and resolves the cruciform DNA. This chain is Crossover junction endodeoxyribonuclease RuvC, found in Streptomyces coelicolor (strain ATCC BAA-471 / A3(2) / M145).